The primary structure comprises 188 residues: RWD domain-containing protein 4 (188 aa).

The region spanning Met9–Phe111 is the RWD domain. The segment at Thr132–Pro167 is disordered. The span at Lys155 to Leu166 shows a compositional bias: basic and acidic residues.

This Rattus norvegicus (Rat) protein is RWD domain-containing protein 4 (Rwdd4).